Consider the following 362-residue polypeptide: Neutral protease 2 homolog MEP2 (362 aa).

A signal peptide spans 1–19 (MLFPSIVAALAALANPVLS). A propeptide spanning residues 20–177 (LTIPQATGSE…SKAINPISAR (158 aa)) is cleaved from the precursor. 2 disulfides stabilise this stretch: Cys184-Cys255 and Cys262-Cys280. His304 is a Zn(2+) binding site. Glu305 is an active-site residue. Zn(2+) contacts are provided by His308 and Asp319.

Belongs to the peptidase M35 family. Zn(2+) is required as a cofactor.

Its subcellular location is the secreted. It catalyses the reaction Preferential cleavage of bonds with hydrophobic residues in P1'. Also 3-Asn-|-Gln-4 and 8-Gly-|-Ser-9 bonds in insulin B chain.. In terms of biological role, secreted metalloproteinase that allows assimilation of proteinaceous substrates. Shows high activities on basic nuclear substrates such as histone and protamine. May be involved in virulence. This Coccidioides posadasii (strain C735) (Valley fever fungus) protein is Neutral protease 2 homolog MEP2 (MEP2).